Reading from the N-terminus, the 863-residue chain is Leucine--tRNA ligase (863 aa).

A 'HIGH' region motif is present at residues 40 to 51 (PYPSGAGLHVGH). The 'KMSKS' region motif lies at 635–639 (KMSKS). Lys-638 contributes to the ATP binding site.

This sequence belongs to the class-I aminoacyl-tRNA synthetase family.

The protein localises to the cytoplasm. The enzyme catalyses tRNA(Leu) + L-leucine + ATP = L-leucyl-tRNA(Leu) + AMP + diphosphate. The protein is Leucine--tRNA ligase of Leptospira interrogans serogroup Icterohaemorrhagiae serovar copenhageni (strain Fiocruz L1-130).